The chain runs to 205 residues: High frequency lysogenization protein HflD homolog (205 aa).

This sequence belongs to the HflD family.

The protein resides in the cytoplasm. The protein localises to the cell inner membrane. In Shewanella sp. (strain W3-18-1), this protein is High frequency lysogenization protein HflD homolog.